Reading from the N-terminus, the 234-residue chain is Sugar fermentation stimulation protein A (234 aa).

The H-T-H motif DNA-binding region spans 201–220; the sequence is LLSEAQQRGVEILAYKAELS.

This sequence belongs to the SfsA family.

Its function is as follows. Binds to DNA non-specifically. Could be a regulatory factor involved in maltose metabolism. The sequence is that of Sugar fermentation stimulation protein A from Escherichia coli (strain SMS-3-5 / SECEC).